The following is a 147-amino-acid chain: MVHFTAEEKATVASLWGKVNVEEAGGEVLGRLLVVYPWTQRFFDNFGNLSSSSAIMGNPKVKAHGKKVLTSFGDAVKHMDDLKGTFAHLSELHCDKLHVDPENFRLLGNVMVVVLASHFGKEFTPEVQAAWQKLVGGVANALAHKYH.

Positions 3–147 (HFTAEEKATV…VANALAHKYH (145 aa)) constitute a Globin domain. Residues Ser14 and Ser51 each carry the phosphoserine modification. Heme b is bound by residues His64 and His93.

Belongs to the globin family. In terms of assembly, heterotetramer of two alpha chains and two epsilon chains in early embryonic hemoglobin Gower-2; two zeta chains and two epsilon chains in early embryonic hemoglobin Gower-1. In terms of tissue distribution, red blood cells.

Its function is as follows. The epsilon chain is a beta-type chain of early mammalian embryonic hemoglobin. In Bradypus tridactylus (Pale-throated three-toed sloth), this protein is Hemoglobin subunit epsilon (HBE1).